Reading from the N-terminus, the 245-residue chain is MYRYKITIEYLGTNLAGWQRQAGVISVQQILEEAIYKFSGEQVILFGSGRTDAGVHAIGQVAHFDLSKHLEPHKIITAINYFARPYAVGVWNCELASNNFHARFSATSRHYIYRIINRPYPSVIDLNRAWWISSPLDVLTMQKAAAYLLGKHDFTSFRASSCQSKSPIKTLTELNIIKEDEEIKLYLSAPSFLHHMVRNIVGSLVLVGKNVWQAEQIKDVLEAKDRKAAGPTAPASGLYFVKTEY.

Aspartate 52 acts as the Nucleophile in catalysis. Tyrosine 111 serves as a coordination point for substrate.

The protein belongs to the tRNA pseudouridine synthase TruA family. As to quaternary structure, homodimer.

It carries out the reaction uridine(38/39/40) in tRNA = pseudouridine(38/39/40) in tRNA. In terms of biological role, formation of pseudouridine at positions 38, 39 and 40 in the anticodon stem and loop of transfer RNAs. The sequence is that of tRNA pseudouridine synthase A from Rickettsia felis (strain ATCC VR-1525 / URRWXCal2) (Rickettsia azadi).